The primary structure comprises 475 residues: Transmembrane protein 44 (475 aa).

Residues 1-29 (MGEAPSPAPALWDWDYLDRCFARHRVCIS) lie on the Extracellular side of the membrane. The chain crosses the membrane as a helical span at residues 30–50 (FGLWICASSCWIAAHALLLYL). Residues 51–61 (RCAQKPRQDQS) are Cytoplasmic-facing. A helical membrane pass occupies residues 62–82 (ALCAACCLLTSLCDTVGALLA). Over 83 to 88 (RQLTIQ) the chain is Extracellular. A helical membrane pass occupies residues 89-109 (VFTGAYLAAIDLVNFMFILFP). The Cytoplasmic portion of the chain corresponds to 110–135 (VCGSKFKSNSDREARERKRRRQLRAS). Residues 136–156 (VFALALPLSLGPCWALWVAVP) form a helical membrane-spanning segment. The Extracellular portion of the chain corresponds to 157–179 (KASATIRGPQRRLLASLLQENTE). The chain crosses the membrane as a helical span at residues 180 to 200 (ILGYLLGSVAAFGSWASRIPP). Over 201-259 (LSRIAPPPTLGITTQHEIWRGQMSKPSQSPSRSPSGHWRAAAQRQVLGTEMCRGKTFPS) the chain is Cytoplasmic. The chain crosses the membrane as a helical span at residues 260–280 (IHLWTRLLSALAGLLYASAIV). Residues 281-294 (AHDQHPEYLLRATP) lie on the Extracellular side of the membrane. Residues 295-315 (WFLTSLGRAALDLAIIFLSCV) form a helical membrane-spanning segment. At 316–475 (MKSKMRQALG…VRTAHLSDDD (160 aa)) the chain is on the cytoplasmic side. The interval 390-475 (SATRLPGDGQ…VRTAHLSDDD (86 aa)) is disordered. Over residues 424–436 (SSGSSSEVSSINS) the composition is skewed to low complexity. Positions 464–475 (DSVRTAHLSDDD) are enriched in basic and acidic residues. At Ser-465 the chain carries Phosphoserine.

Its subcellular location is the membrane. This is Transmembrane protein 44 (TMEM44) from Homo sapiens (Human).